The chain runs to 320 residues: Cytochrome f (320 aa).

The first 35 residues, 1-35 (MQTRNTFSWIREEITRSISVSLIIYIITWASISSA), serve as a signal peptide directing secretion. Heme is bound by residues Tyr36, Cys56, Cys59, and His60. Residues 286 to 305 (VQGLLFFLGSVVLAQIFLVL) traverse the membrane as a helical segment.

Belongs to the cytochrome f family. The 4 large subunits of the cytochrome b6-f complex are cytochrome b6, subunit IV (17 kDa polypeptide, petD), cytochrome f and the Rieske protein, while the 4 small subunits are PetG, PetL, PetM and PetN. The complex functions as a dimer. Heme serves as cofactor.

Its subcellular location is the plastid. It is found in the chloroplast thylakoid membrane. Its function is as follows. Component of the cytochrome b6-f complex, which mediates electron transfer between photosystem II (PSII) and photosystem I (PSI), cyclic electron flow around PSI, and state transitions. The protein is Cytochrome f (petA) of Arabidopsis thaliana (Mouse-ear cress).